The chain runs to 204 residues: Inactive ribonuclease-like protein 9 (204 aa).

The N-terminal stretch at 1 to 26 (MMRTLITIHPLPLLLLLQQLLQPVQF) is a signal peptide. Intrachain disulfides connect Cys97–Cys152, Cys115–Cys167, and Cys122–Cys129. N-linked (GlcNAc...) asparagine glycosylation is found at Asn130 and Asn142.

It belongs to the pancreatic ribonuclease family.

The protein localises to the secreted. Does not exhibit any ribonuclease activity. The sequence is that of Inactive ribonuclease-like protein 9 (RNASE9) from Pongo pygmaeus (Bornean orangutan).